We begin with the raw amino-acid sequence, 158 residues long: Small ribosomal subunit protein uS7 (158 aa).

This sequence belongs to the universal ribosomal protein uS7 family. As to quaternary structure, part of the 30S ribosomal subunit. Contacts proteins S9 and S11.

One of the primary rRNA binding proteins, it binds directly to 16S rRNA where it nucleates assembly of the head domain of the 30S subunit. Is located at the subunit interface close to the decoding center, probably blocks exit of the E-site tRNA. In Bacteroides fragilis (strain YCH46), this protein is Small ribosomal subunit protein uS7.